The chain runs to 746 residues: Iron-sulfur clusters transporter ABCB7, mitochondrial (746 aa).

A mitochondrion-targeting transit peptide spans 1–19; the sequence is MAPMLVSLNCGIRVQRRTL. Residues 20–133 lie on the Mitochondrial matrix side of the membrane; it reads TLLIRQTSSY…KDRPDLRARV (114 aa). The ABC transmembrane type-1 domain maps to 133-429; that stretch reads VAVSLGLLAG…LGTVYRETRQ (297 aa). Residues 134–154 traverse the membrane as a helical segment; it reads AVSLGLLAGAKLTNVMVPFMF. At 155–176 the chain is on the mitochondrial intermembrane side; sequence KYAVDELNQMSGHMLNLNDAPS. The chain crosses the membrane as a helical span at residues 177-199; it reads TVATMTTAVLIGYGVSRAGSALF. The Mitochondrial matrix portion of the chain corresponds to 200–252; it reads NELRNTVFGKVAQSSIRRIAKNVFLHLHNLDLGFHLSRQTGALSKAIDRGTRG. Residues 253–273 traverse the membrane as a helical segment; that stretch reads ISFVLSALVFNLGPTVFEMFL. The Mitochondrial intermembrane portion of the chain corresponds to 274 to 283; it reads VSAILYYKCG. Residues 284-304 form a helical membrane-spanning segment; sequence GEFAAVALGTLSAYTIFTILV. Over 305 to 375 the chain is Mitochondrial matrix; the sequence is TQWRTRFRIE…TLAMLNFGQS (71 aa). Glutathione-binding positions include 308–312 and 371–374; these read RTRFR and NFGQ. The helical transmembrane segment at 376-396 threads the bilayer; it reads AIFSVGLTAIMLLASKGIAAG. Residues 397-402 lie on the Mitochondrial intermembrane side of the membrane; that stretch reads NMTVGD. A helical membrane pass occupies residues 403–423; it reads LVMVNGLLFQLSLPLNFLGTV. Residue glycine 421 participates in glutathione binding. The Mitochondrial matrix portion of the chain corresponds to 424-746; the sequence is YRETRQALID…SVKGCGNCSC (323 aa). Residues 465 to 699 enclose the ABC transporter domain; that stretch reads IRFEDVYFEY…PGSLYAELWN (235 aa). ATP is bound by residues tyrosine 474 and 498 to 505; that span reads GGSGSGKS. Positions 708–728 are disordered; it reads SRKSSSAPAAERLSQKEEERK.

The protein belongs to the ABC transporter superfamily. ABCB family. Heavy Metal importer (TC 3.A.1.210) subfamily. Homodimer.

Its subcellular location is the mitochondrion inner membrane. The protein resides in the mitochondrion. The catalysed reaction is (glutathione)4[2Fe(III)-2S] cluster(in) + ATP + H2O = (glutathione)4[2Fe(III)-2S] cluster(out) + ADP + phosphate + H(+). Functionally, exports glutathione-coordinated iron-sulfur clusters such as [2Fe-2S]-(GS)4 cluster from the mitochondria to the cytosol in an ATP-dependent manner allowing the assembly of the cytosolic iron-sulfur (Fe/S) cluster-containing proteins and participates in iron homeostasis. May play a role in iron and lipid metabolism. The polypeptide is Iron-sulfur clusters transporter ABCB7, mitochondrial (Oryzias latipes (Japanese rice fish)).